A 176-amino-acid chain; its full sequence is Nascent polypeptide-associated complex subunit alpha (176 aa).

Residues 16–80 (PKNEKKAREL…AKVDDMNQRI (65 aa)) form the NAC-A/B domain. The interval 83-110 (AQAAQAAETDAHAGHTHSHGEEDKSPEA) is disordered. Residues 91–110 (TDAHAGHTHSHGEEDKSPEA) show a composition bias toward basic and acidic residues. Residues 138–175 (LDAKDIDIIVEQTQVSRAKAVKALRKHDGDMVNAIMEL) enclose the UBA domain.

It belongs to the NAC-alpha family. Part of the nascent polypeptide-associated complex (NAC), consisting of EGD2 and EGD1. NAC associates with ribosomes via EGD1.

The protein localises to the cytoplasm. The protein resides in the nucleus. Functionally, component of the nascent polypeptide-associated complex (NAC), a dynamic component of the ribosomal exit tunnel, protecting the emerging polypeptides from interaction with other cytoplasmic proteins to ensure appropriate nascent protein targeting. The NAC complex also promotes mitochondrial protein import by enhancing productive ribosome interactions with the outer mitochondrial membrane and blocks the inappropriate interaction of ribosomes translating non-secretory nascent polypeptides with translocation sites in the membrane of the endoplasmic reticulum. EGD2 may also be involved in transcription regulation. The polypeptide is Nascent polypeptide-associated complex subunit alpha (EGD2) (Scheffersomyces stipitis (strain ATCC 58785 / CBS 6054 / NBRC 10063 / NRRL Y-11545) (Yeast)).